A 152-amino-acid chain; its full sequence is Transcriptional regulator MraZ (152 aa).

2 SpoVT-AbrB domains span residues 5-52 (ASAI…PLDE) and 81-124 (AHEC…DETA).

The protein belongs to the MraZ family. As to quaternary structure, forms oligomers.

The protein resides in the cytoplasm. The protein localises to the nucleoid. The polypeptide is Transcriptional regulator MraZ (Shewanella woodyi (strain ATCC 51908 / MS32)).